We begin with the raw amino-acid sequence, 356 residues long: Putative mitogen-activated protein kinase 14C (356 aa).

One can recognise a Protein kinase domain in the interval 20-305 (YEFVRFLGGG…AAEAMLHPYL (286 aa)). ATP contacts are provided by residues 26 to 34 (LGGGSFGQV) and Lys-49. Asp-147 acts as the Proton acceptor in catalysis. Phosphothreonine is present on Thr-177.

Belongs to the protein kinase superfamily. CMGC Ser/Thr protein kinase family. MAP kinase subfamily. It depends on Mg(2+) as a cofactor. Post-translationally, the phosphorylation on Thr-177 activates the enzyme. A conserved Tyr, which must also be phosphorylated to activate the enzyme in closely related sequences, is replaced by His-179 in this sequence.

It catalyses the reaction L-seryl-[protein] + ATP = O-phospho-L-seryl-[protein] + ADP + H(+). The catalysed reaction is L-threonyl-[protein] + ATP = O-phospho-L-threonyl-[protein] + ADP + H(+). Kinase involved in a signal transduction pathway. This is Putative mitogen-activated protein kinase 14C (p38c) from Drosophila melanogaster (Fruit fly).